Consider the following 147-residue polypeptide: Large ribosomal subunit protein uL15 (147 aa).

A disordered region spans residues 1 to 42; the sequence is MTIKVHHLRPAPGAKTTKTRVGRGEGSKGKTAGRGTKGSKAR.

The protein belongs to the universal ribosomal protein uL15 family. As to quaternary structure, part of the 50S ribosomal subunit.

In terms of biological role, binds to the 23S rRNA. The chain is Large ribosomal subunit protein uL15 from Salinispora tropica (strain ATCC BAA-916 / DSM 44818 / JCM 13857 / NBRC 105044 / CNB-440).